The chain runs to 198 residues: MDSLLMNRRKFLYQFKNVRWAKGRRETYLCYVVKRRDSATSFSLDFGYLRNKNGCHVELLFLRYISDWDLDPGRCYRVTWFTSWSPCYDCARHVADFLRGNPNLSLRIFTARLYFCEDRKAEPEGLRRLHRAGVQIAIMTFKDYFYCWNTFVENHERTFKAWEGLHENSVRLSRQLRRILLPLYEVDDLRDAFRTLGL.

The short motif at 1-30 is the Bipartite nuclear localization signal element; that stretch reads MDSLLMNRRKFLYQFKNVRWAKGRRETYLC. Residues 2 to 26 form an interaction with SUPT6H region; that stretch reads DSLLMNRRKFLYQFKNVRWAKGRRE. Residues 23–129 enclose the CMP/dCMP-type deaminase domain; sequence GRRETYLCYV…KAEPEGLRRL (107 aa). T27 is subject to Phosphothreonine; by PKA. S38 carries the phosphoserine; by PKA modification. The segment at 39–42 is important for interaction with CTNNBL1; that stretch reads ATSF. H56 is a Zn(2+) binding site. E58 functions as the Proton donor in the catalytic mechanism. Residues C87 and C90 each coordinate Zn(2+). The interval 88–116 is required for interaction with RNF126; sequence YDCARHVADFLRGNPNLSLRIFTARLYFC. The Nuclear export signal signature appears at 183-198; that stretch reads LYEVDDLRDAFRTLGL.

The protein belongs to the cytidine and deoxycytidylate deaminase family. As to quaternary structure, interacts with CTNNBL1; the interaction is important for the immunoglobulin switch activity of AICDA. Interacts (via its NLS) with KPNA1. Interacts with PKA/PRKACA and PRKAR1A/PKR1. Interacts with TRIM28 and NCL. Interacts with SUPT6H. Interacts with RNF126. Directly interacts with MCM3AP; this interaction may favor AICDA recruitment to immunoglobulin variable region genes, hence promoting somatic hypermutations. Zn(2+) is required as a cofactor. In terms of processing, ser-38 is the major site whereas Thr-27 is the minor site of phosphorylation. Phosphorylation regulates its class-switch recombination activity. Post-translationally, probably monoubiquitinated on several residues by RNF126. Strongly expressed in lymph nodes and tonsils.

It is found in the nucleus. The protein localises to the cytoplasm. The protein resides in the cytosol. The enzyme catalyses a 2'-deoxycytidine in single-stranded DNA + H2O + H(+) = a 2'-deoxyuridine in single-stranded DNA + NH4(+). In terms of biological role, single-stranded DNA-specific cytidine deaminase. Involved in somatic hypermutation (SHM), gene conversion, and class-switch recombination (CSR) in B-lymphocytes by deaminating C to U during transcription of Ig-variable (V) and Ig-switch (S) region DNA. Required for several crucial steps of B-cell terminal differentiation necessary for efficient antibody responses. May also play a role in the epigenetic regulation of gene expression by participating in DNA demethylation. In Homo sapiens (Human), this protein is Single-stranded DNA cytosine deaminase (AICDA).